The chain runs to 158 residues: NAD(P)H-quinone oxidoreductase subunit J, chloroplastic (158 aa).

The protein belongs to the complex I 30 kDa subunit family. In terms of assembly, NDH is composed of at least 16 different subunits, 5 of which are encoded in the nucleus.

Its subcellular location is the plastid. It localises to the chloroplast thylakoid membrane. It catalyses the reaction a plastoquinone + NADH + (n+1) H(+)(in) = a plastoquinol + NAD(+) + n H(+)(out). The enzyme catalyses a plastoquinone + NADPH + (n+1) H(+)(in) = a plastoquinol + NADP(+) + n H(+)(out). Its function is as follows. NDH shuttles electrons from NAD(P)H:plastoquinone, via FMN and iron-sulfur (Fe-S) centers, to quinones in the photosynthetic chain and possibly in a chloroplast respiratory chain. The immediate electron acceptor for the enzyme in this species is believed to be plastoquinone. Couples the redox reaction to proton translocation, and thus conserves the redox energy in a proton gradient. The chain is NAD(P)H-quinone oxidoreductase subunit J, chloroplastic from Trachelium caeruleum (Blue throatwort).